The primary structure comprises 64 residues: Large ribosomal subunit protein uL29 (64 aa).

Belongs to the universal ribosomal protein uL29 family.

This is Large ribosomal subunit protein uL29 from Solidesulfovibrio magneticus (strain ATCC 700980 / DSM 13731 / RS-1) (Desulfovibrio magneticus).